A 403-amino-acid polypeptide reads, in one-letter code: uncharacterized protein (403 aa).

Histidine 81 is a binding site for Zn(2+). Residue aspartate 83 is part of the active site. Aspartate 114 provides a ligand contact to Zn(2+). Glutamate 148 (proton acceptor) is an active-site residue. Zn(2+) is bound by residues glutamate 149, glutamate 174, and histidine 374.

The protein belongs to the peptidase M20A family. It depends on Zn(2+) as a cofactor. The cofactor is Co(2+).

This is an uncharacterized protein from Escherichia coli O157:H7.